The chain runs to 85 residues: Insecticidal toxin Vn1 (85 aa).

Positions 1–23 (MFLYRLICLFILICIITVDISTS) are cleaved as a signal peptide. A disulfide bridge links Cys-71 with Cys-84.

In terms of tissue distribution, highly expressed in the venom apparatus, and weakly expressed in residual body.

It localises to the secreted. Endoparasitoid venom toxin that exhibits insecticidal activity against Tenebrio molitor pupae. Impacts genes related to immune response, environmental information processing, metabolism, and response to external stimuli in T.molitor, suggesting its involvement in the intricate parasitoid wasp-host interaction. The chain is Insecticidal toxin Vn1 from Aphidius gifuensis (Parasitoid wasp).